The following is a 244-amino-acid chain: 15,16-dihydrobiliverdin:ferredoxin oxidoreductase (244 aa).

Belongs to the HY2 family.

The enzyme catalyses 15,16-dihydrobiliverdin + oxidized 2[4Fe-4S]-[ferredoxin] = biliverdin IXalpha + reduced 2[4Fe-4S]-[ferredoxin] + 2 H(+). Catalyzes the two-electron reduction of biliverdin IX-alpha at the C15 methine bridge. The sequence is that of 15,16-dihydrobiliverdin:ferredoxin oxidoreductase (pebA) from Gloeobacter violaceus (strain ATCC 29082 / PCC 7421).